Here is a 122-residue protein sequence, read N- to C-terminus: Large ribosomal subunit protein uL14 (122 aa).

It belongs to the universal ribosomal protein uL14 family. In terms of assembly, part of the 50S ribosomal subunit. Forms a cluster with proteins L3 and L19. In the 70S ribosome, L14 and L19 interact and together make contacts with the 16S rRNA in bridges B5 and B8.

In terms of biological role, binds to 23S rRNA. Forms part of two intersubunit bridges in the 70S ribosome. This chain is Large ribosomal subunit protein uL14, found in Psychrobacter arcticus (strain DSM 17307 / VKM B-2377 / 273-4).